We begin with the raw amino-acid sequence, 304 residues long: Putative ankyrin repeat protein R602 (304 aa).

6 ANK repeats span residues 82-117 (LIRY…DITF), 118-146 (NDNF…DVHA), 147-176 (DNEF…DPFC), 178-206 (DNIV…DINA), 207-236 (GNNY…SIND), and 238-266 (SPND…DIST).

The protein is Putative ankyrin repeat protein R602 of Acanthamoeba polyphaga (Amoeba).